Reading from the N-terminus, the 113-residue chain is UPF0060 membrane protein Arth_4423 (113 aa).

A run of 4 helical transmembrane segments spans residues V7–A27, A33–L53, I62–D82, and V91–T111.

Belongs to the UPF0060 family.

Its subcellular location is the cell membrane. This Arthrobacter sp. (strain FB24) protein is UPF0060 membrane protein Arth_4423.